The sequence spans 71 residues: Small ribosomal subunit protein bS21 (71 aa).

Belongs to the bacterial ribosomal protein bS21 family.

The polypeptide is Small ribosomal subunit protein bS21 (Wigglesworthia glossinidia brevipalpis).